A 91-amino-acid polypeptide reads, in one-letter code: Small ribosomal subunit protein uS19 (91 aa).

It belongs to the universal ribosomal protein uS19 family.

Protein S19 forms a complex with S13 that binds strongly to the 16S ribosomal RNA. In Leptothrix cholodnii (strain ATCC 51168 / LMG 8142 / SP-6) (Leptothrix discophora (strain SP-6)), this protein is Small ribosomal subunit protein uS19.